The following is a 100-amino-acid chain: UPF0213 protein YhbQ (100 aa).

One can recognise a GIY-YIG domain in the interval 2–77; the sequence is TPWFLYLIRT…KQLTKRQKER (76 aa).

The protein belongs to the UPF0213 family.

This chain is UPF0213 protein YhbQ, found in Escherichia coli O157:H7.